The primary structure comprises 601 residues: Leucine-rich repeat-containing protein 40 (601 aa).

LRR repeat units lie at residues Ala-33–Leu-56, Gln-79–Leu-101, Leu-102–Asp-124, Leu-125–Leu-148, Asn-150–Gln-170, Leu-171–Asn-193, Leu-194–Met-217, Asn-219–Gln-239, Met-240–Thr-264, Lys-266–His-285, Leu-286–Leu-308, Leu-309–Lys-334, Lys-336–Lys-355, Ile-397–Ala-420, Gly-423–Leu-446, Lys-447–His-469, Leu-470–Gly-492, Leu-493–Ile-516, Ser-518–Thr-539, Leu-540–Cys-563, and Ser-565–Lys-586.

The sequence is that of Leucine-rich repeat-containing protein 40 (lrrc40) from Danio rerio (Zebrafish).